A 336-amino-acid chain; its full sequence is uncharacterized protein (336 aa).

A signal peptide spans 1–33; that stretch reads MGSAWPAEIRKIAKISKRLLGATVILGFGVAEA.

This is an uncharacterized protein from Sinorhizobium fredii (strain NBRC 101917 / NGR234).